Reading from the N-terminus, the 401-residue chain is S-adenosylmethionine synthase (401 aa).

An ATP-binding site is contributed by histidine 15. Aspartate 17 contacts Mg(2+). Position 48 (glutamate 48) interacts with K(+). L-methionine contacts are provided by glutamate 61 and glutamine 104. Positions 104-114 are flexible loop; it reads QSPDIALGVDR. ATP contacts are provided by residues 179 to 181, 246 to 247, aspartate 255, 261 to 262, alanine 278, and lysine 282; these read DGK, RF, and RK. An L-methionine-binding site is contributed by aspartate 255. Lysine 286 lines the L-methionine pocket.

This sequence belongs to the AdoMet synthase family. In terms of assembly, homotetramer; dimer of dimers. Requires Mg(2+) as cofactor. K(+) serves as cofactor.

It localises to the cytoplasm. The enzyme catalyses L-methionine + ATP + H2O = S-adenosyl-L-methionine + phosphate + diphosphate. It functions in the pathway amino-acid biosynthesis; S-adenosyl-L-methionine biosynthesis; S-adenosyl-L-methionine from L-methionine: step 1/1. Catalyzes the formation of S-adenosylmethionine (AdoMet) from methionine and ATP. The overall synthetic reaction is composed of two sequential steps, AdoMet formation and the subsequent tripolyphosphate hydrolysis which occurs prior to release of AdoMet from the enzyme. This Petrotoga mobilis (strain DSM 10674 / SJ95) protein is S-adenosylmethionine synthase.